Consider the following 38-residue polypeptide: Small ribosomal subunit protein eS32 (38 aa).

Belongs to the eukaryotic ribosomal protein eS32 family. Component of the small ribosomal subunit (SSU).

In Methanocaldococcus jannaschii (strain ATCC 43067 / DSM 2661 / JAL-1 / JCM 10045 / NBRC 100440) (Methanococcus jannaschii), this protein is Small ribosomal subunit protein eS32 (rpl41e).